The primary structure comprises 291 residues: MEMO1 family protein TK1477 (291 aa).

Belongs to the MEMO1 family.

The polypeptide is MEMO1 family protein TK1477 (Thermococcus kodakarensis (strain ATCC BAA-918 / JCM 12380 / KOD1) (Pyrococcus kodakaraensis (strain KOD1))).